The following is a 376-amino-acid chain: Putative E3 ubiquitin-protein ligase XBAT34 (376 aa).

ANK repeat units follow at residues 41 to 71 (LGRT…NVNA) and 77 to 106 (NGGT…NPLV). Residues 325–364 (CVICVDAPSEAVCVPCGHVAGCISCLKEIENKKMGCPVCR) form an RING-type zinc finger.

It catalyses the reaction S-ubiquitinyl-[E2 ubiquitin-conjugating enzyme]-L-cysteine + [acceptor protein]-L-lysine = [E2 ubiquitin-conjugating enzyme]-L-cysteine + N(6)-ubiquitinyl-[acceptor protein]-L-lysine.. It functions in the pathway protein modification; protein ubiquitination. Its function is as follows. No E3 ubiquitin-protein ligase activity observed when associated with the E2 enzyme UBC8 in vitro. This is Putative E3 ubiquitin-protein ligase XBAT34 (XBAT34) from Arabidopsis thaliana (Mouse-ear cress).